The primary structure comprises 409 residues: Z-DNA-binding protein 1 (409 aa).

Z-binding domains follow at residues 8–70 and 85–147; these read LGTG…SLGG and SAAQ…TIYR. Residues K17 and K43 each participate in a glycyl lysine isopeptide (Lys-Gly) (interchain with G-Cter in ubiquitin) cross-link. Positions 59–87 are disordered; it reads SSPAPATWSLGGDGASGDGAPEIPEDSAA. Short sequence motifs (RIP homotypic interaction motif (RHIM)) lie at residues 183–207 and 241–265; these read NSLI…RQTI and LIHL…LERD. 2 disordered regions span residues 269–307 and 323–369; these read HPIF…GGTT and GNNN…TPSD. Positions 270–290 are enriched in low complexity; that stretch reads PIFSFSSSPPESTTTADPETA. The span at 337 to 351 shows a compositional bias: basic and acidic residues; sequence GTKESADSQELKEDT.

Homodimer. Interacts (via RIP homotypic interaction motif) with RIPK3; leading to RIPK3 activation and necroptosis; interaction is enhanced by CASP6. Interacts (via RIP homotypic interaction motif) with RIPK1. Component of the AIM2 PANoptosome complex, a multiprotein complex that drives inflammatory cell death (PANoptosis). Post-translationally, ubiquitinated; polyubiquitinated following influenza A virus (IAV) infection. Phosphorylated.

The protein localises to the cytoplasm. Its subcellular location is the nucleus. Its activity is regulated as follows. ZBP1-dependent necroptosis is normally inhibited by RIPK1: RIPK1 inhibits the ZBP1-induced activation of RIPK3 via FADD-mediated recruitment of CASP8, which cleaves RIPK1 and limits TNF-induced necroptosis. In terms of biological role, key innate sensor that recognizes and binds Z-RNA structures, which are produced by a number of viruses, such as herpesvirus, orthomyxovirus or flavivirus, and triggers different forms of cell death. ZBP1 acts as an essential mediator of pyroptosis, necroptosis and apoptosis (PANoptosis), an integral part of host defense against pathogens, by activating RIPK3, caspase-8 (CASP8), and the NLRP3 inflammasome. Key activator of necroptosis, a programmed cell death process in response to death-inducing TNF-alpha family members, via its ability to bind Z-RNA: once activated upon Z-RNA-binding, ZBP1 interacts and stimulates RIPK3 kinase, which phosphorylates and activates MLKL, triggering execution of programmed necrosis. In addition to TNF-induced necroptosis, necroptosis can also take place in the nucleus in response to orthomyxoviruses infection: ZBP1 recognizes and binds Z-RNA structures that are produced in infected nuclei by orthomyxoviruses, such as the influenza A virus (IAV), leading to ZBP1 activation, RIPK3 stimulation and subsequent MLKL phosphorylation, triggering disruption of the nuclear envelope and leakage of cellular DNA into the cytosol. ZBP1-dependent cell death in response to IAV infection promotes interleukin-1 alpha (IL1A) induction in an NLRP3-inflammasome-independent manner: IL1A expression is required for the optimal interleukin-1 beta (IL1B) production, and together, these cytokines promote infiltration of inflammatory neutrophils to the lung, leading to the formation of neutrophil extracellular traps. In addition to its direct role in driving necroptosis via its ability to sense Z-RNAs, also involved in PANoptosis triggered in response to bacterial infection: component of the AIM2 PANoptosome complex, a multiprotein complex that triggers PANoptosis. Also acts as the apical sensor of fungal infection responsible for activating PANoptosis. Involved in CASP8-mediated cell death via its interaction with RIPK1 but independently of its ability to sense Z-RNAs. In some cell types, also able to restrict viral replication by promoting cell death-independent responses. In response to flavivirus infection in neurons, promotes a cell death-independent pathway that restricts viral replication: together with RIPK3, promotes a death-independent transcriptional program that modifies the cellular metabolism via up-regulation expression of the enzyme ACOD1/IRG1 and production of the metabolite itaconate. Itaconate inhibits the activity of succinate dehydrogenase, generating a metabolic state in neurons that suppresses replication of viral genomes. This Rattus norvegicus (Rat) protein is Z-DNA-binding protein 1.